A 550-amino-acid chain; its full sequence is Rhodopsin kinase grk7-b (550 aa).

Residues 22–45 (SSEGDAKELQKRRKSLSLPPPDVS) are disordered. The residue at position 36 (Ser-36) is a Phosphoserine. Positions 57–174 (YQSICVEQPI…QNSPFYDRFL (118 aa)) constitute an RGS domain. Residues 189–451 (FYEFRILGKG…DDDPRKHAFF (263 aa)) form the Protein kinase domain. Residues 195–203 (LGKGGFGEV) and Lys-218 contribute to the ATP site. The active-site Proton acceptor is the Asp-314. Residues 452-517 (KSINFQRLEA…GAVPISWQKE (66 aa)) enclose the AGC-kinase C-terminal domain. Ser-487 is subject to Phosphoserine. Residues 531–550 (SREVTGGGNSGEKSGVCSIL) form a disordered region. At Cys-547 the chain carries Cysteine methyl ester. A lipid anchor (S-geranylgeranyl cysteine) is attached at Cys-547. Residues 548-550 (SIL) constitute a propeptide, removed in mature form.

The protein belongs to the protein kinase superfamily. AGC Ser/Thr protein kinase family. GPRK subfamily. In terms of processing, autophosphorylated in vitro at Ser-487. Phosphorylation at Ser-36 is regulated by light and activated by cAMP. Retina, cones.

It localises to the membrane. It carries out the reaction L-threonyl-[rhodopsin] + ATP = O-phospho-L-threonyl-[rhodopsin] + ADP + H(+). The catalysed reaction is L-seryl-[rhodopsin] + ATP = O-phospho-L-seryl-[rhodopsin] + ADP + H(+). Its function is as follows. Retina-specific kinase involved in the shutoff of the photoresponse and adaptation to changing light conditions via cone opsin phosphorylation, including rhodopsin (RHO). The protein is Rhodopsin kinase grk7-b (grk7-b) of Xenopus laevis (African clawed frog).